The chain runs to 230 residues: Large ribosomal subunit protein uL1 (230 aa).

It belongs to the universal ribosomal protein uL1 family. In terms of assembly, part of the 50S ribosomal subunit.

In terms of biological role, binds directly to 23S rRNA. The L1 stalk is quite mobile in the ribosome, and is involved in E site tRNA release. Functionally, protein L1 is also a translational repressor protein, it controls the translation of the L11 operon by binding to its mRNA. The chain is Large ribosomal subunit protein uL1 from Paramagnetospirillum magneticum (strain ATCC 700264 / AMB-1) (Magnetospirillum magneticum).